We begin with the raw amino-acid sequence, 217 residues long: Glycosylphosphatidylinositol anchor biosynthesis protein 11 (217 aa).

6 consecutive transmembrane segments (helical) span residues 45–61 (TWQT…YWFI), 74–94 (WLLV…ATVY), 111–131 (VTCI…GAPF), 138–158 (TWLL…SVLN), 169–189 (YFIS…LDWD), and 195–215 (WPIP…TFCS).

It belongs to the PIGF family.

The protein resides in the endoplasmic reticulum membrane. Its pathway is glycolipid biosynthesis; glycosylphosphatidylinositol-anchor biosynthesis. Functionally, acts in the GPI biosynthetic pathway between GlcNAc-PI synthesis and GPI transfer to protein. This chain is Glycosylphosphatidylinositol anchor biosynthesis protein 11 (GPI11), found in Eremothecium gossypii (strain ATCC 10895 / CBS 109.51 / FGSC 9923 / NRRL Y-1056) (Yeast).